Reading from the N-terminus, the 258-residue chain is UPF0246 protein ETA_07010 (258 aa).

The protein belongs to the UPF0246 family.

The sequence is that of UPF0246 protein ETA_07010 from Erwinia tasmaniensis (strain DSM 17950 / CFBP 7177 / CIP 109463 / NCPPB 4357 / Et1/99).